The following is a 204-amino-acid chain: MTTSRHGPLRVGIGGPVGSGKTALMEGLCKALRARYDLCAITNDIYTKEDARLLTVAGALPEERIMGVETGGCPHTAIREDASINLAAVAEMRRRFPALDLILIESGGDNLAATFSPELADLTLYVIDVAGGEKIPRKGGPGITRSDLLVINKTDLAPLVGADLAVMEADTRRMRGSRPYVFTSLRQGEGVEEVARFVVEAGGL.

15–22 (GPVGSGKT) serves as a coordination point for GTP.

Belongs to the SIMIBI class G3E GTPase family. UreG subfamily. As to quaternary structure, homodimer. UreD, UreF and UreG form a complex that acts as a GTP-hydrolysis-dependent molecular chaperone, activating the urease apoprotein by helping to assemble the nickel containing metallocenter of UreC. The UreE protein probably delivers the nickel.

The protein resides in the cytoplasm. Facilitates the functional incorporation of the urease nickel metallocenter. This process requires GTP hydrolysis, probably effectuated by UreG. The sequence is that of Urease accessory protein UreG from Methylobacterium nodulans (strain LMG 21967 / CNCM I-2342 / ORS 2060).